We begin with the raw amino-acid sequence, 735 residues long: Ribosomal RNA large subunit methyltransferase K/L (735 aa).

Residues 45–156 (DGYRACLWSR…RDSLSFSLDL (112 aa)) form the THUMP domain.

The protein belongs to the methyltransferase superfamily. RlmKL family.

It localises to the cytoplasm. The catalysed reaction is guanosine(2445) in 23S rRNA + S-adenosyl-L-methionine = N(2)-methylguanosine(2445) in 23S rRNA + S-adenosyl-L-homocysteine + H(+). It carries out the reaction guanosine(2069) in 23S rRNA + S-adenosyl-L-methionine = N(2)-methylguanosine(2069) in 23S rRNA + S-adenosyl-L-homocysteine + H(+). In terms of biological role, specifically methylates the guanine in position 2445 (m2G2445) and the guanine in position 2069 (m7G2069) of 23S rRNA. The protein is Ribosomal RNA large subunit methyltransferase K/L of Allochromatium vinosum (strain ATCC 17899 / DSM 180 / NBRC 103801 / NCIMB 10441 / D) (Chromatium vinosum).